The chain runs to 446 residues: Argininosuccinate synthase (446 aa).

Residues 17-25 (AFSGGLDTS) and alanine 43 each bind ATP. Tyrosine 99 contacts L-citrulline. The ATP site is built by glycine 129 and threonine 131. L-aspartate is bound by residues threonine 131, asparagine 135, and aspartate 136. Asparagine 135 is a binding site for L-citrulline. Aspartate 136 is a binding site for ATP. The L-citrulline site is built by arginine 139 and serine 192. Position 194 (aspartate 194) interacts with ATP. Positions 201, 203, and 280 each coordinate L-citrulline.

Belongs to the argininosuccinate synthase family. Type 2 subfamily. In terms of assembly, homotetramer.

It localises to the cytoplasm. The enzyme catalyses L-citrulline + L-aspartate + ATP = 2-(N(omega)-L-arginino)succinate + AMP + diphosphate + H(+). It participates in amino-acid biosynthesis; L-arginine biosynthesis; L-arginine from L-ornithine and carbamoyl phosphate: step 2/3. The chain is Argininosuccinate synthase from Methylibium petroleiphilum (strain ATCC BAA-1232 / LMG 22953 / PM1).